A 337-amino-acid polypeptide reads, in one-letter code: 5-formaminoimidazole-4-carboxamide-1-(beta)-D-ribofuranosyl 5'-monophosphate synthetase (337 aa).

5-amino-1-(5-phospho-beta-D-ribosyl)imidazole-4-carboxamide is bound by residues H14 and S74. In terms of domain architecture, ATP-grasp spans 81 to 328; the sequence is VELVERMKVP…IAREIRLAIE (248 aa). ATP-binding positions include 125 to 185 and E207; that span reads PDDI…VPVY. N235 provides a ligand contact to 5-amino-1-(5-phospho-beta-D-ribosyl)imidazole-4-carboxamide. Residues E273 and E286 each coordinate Mg(2+).

This sequence belongs to the phosphohexose mutase family. Requires Mg(2+) as cofactor. It depends on Mn(2+) as a cofactor.

It catalyses the reaction 5-amino-1-(5-phospho-beta-D-ribosyl)imidazole-4-carboxamide + formate + ATP = 5-formamido-1-(5-phospho-D-ribosyl)imidazole-4-carboxamide + ADP + phosphate. The protein operates within purine metabolism; IMP biosynthesis via de novo pathway; 5-formamido-1-(5-phospho-D-ribosyl)imidazole-4-carboxamide from 5-amino-1-(5-phospho-D-ribosyl)imidazole-4-carboxamide (formate route): step 1/1. Functionally, catalyzes the ATP- and formate-dependent formylation of 5-aminoimidazole-4-carboxamide-1-beta-d-ribofuranosyl 5'-monophosphate (AICAR) to 5-formaminoimidazole-4-carboxamide-1-beta-d-ribofuranosyl 5'-monophosphate (FAICAR) in the absence of folates. In Pyrococcus abyssi (strain GE5 / Orsay), this protein is 5-formaminoimidazole-4-carboxamide-1-(beta)-D-ribofuranosyl 5'-monophosphate synthetase.